A 459-amino-acid polypeptide reads, in one-letter code: Tryptophan synthase beta chain (459 aa).

Position 121 is an N6-(pyridoxal phosphate)lysine (K121).

This sequence belongs to the TrpB family. In terms of assembly, tetramer of two alpha and two beta chains. Pyridoxal 5'-phosphate serves as cofactor.

The enzyme catalyses (1S,2R)-1-C-(indol-3-yl)glycerol 3-phosphate + L-serine = D-glyceraldehyde 3-phosphate + L-tryptophan + H2O. It participates in amino-acid biosynthesis; L-tryptophan biosynthesis; L-tryptophan from chorismate: step 5/5. Functionally, the beta subunit is responsible for the synthesis of L-tryptophan from indole and L-serine. This chain is Tryptophan synthase beta chain (trpB), found in Pyrococcus horikoshii (strain ATCC 700860 / DSM 12428 / JCM 9974 / NBRC 100139 / OT-3).